The chain runs to 24 residues: Ascaphin-7 (24 aa).

As to expression, expressed by the skin glands.

The protein localises to the secreted. Antimicrobial peptide that shows higher potency against Gram-negative bacteria than against Gram-positive bacteria. Has a very week hemolytic activity. This Ascaphus truei (Coastal tailed frog) protein is Ascaphin-7.